Reading from the N-terminus, the 222-residue chain is L-cystine transport system permease protein TcyL (222 aa).

Topologically, residues 1-22 (MQESIQLVIDSLPFLLKGAGYT) are periplasmic. The ABC transmembrane type-1 domain occupies 19 to 207 (AGYTLQLSIG…IMATVLSTLQ (189 aa)). A helical membrane pass occupies residues 23-43 (LQLSIGGMFFGLLLGFILALM). Topologically, residues 44–64 (RLSPIWPVRWLARFYISIFRG) are cytoplasmic. Residues 65–85 (TPLIAQLFMIYYGLPQFGIEL) traverse the membrane as a helical segment. The Periplasmic segment spans residues 86–182 (DPIPSAMIGL…RQAQLITSRT (97 aa)). A helical transmembrane segment spans residues 183 to 203 (LEVFTMYLAASLIYWIMATVL). At 204-222 (STLQNHFENQLNRQEREPK) the chain is on the cytoplasmic side.

Belongs to the binding-protein-dependent transport system permease family. HisMQ subfamily. As to quaternary structure, the complex is composed of two ATP-binding proteins (TcyN), two transmembrane proteins (TcyL) and a solute-binding protein (TcyJ).

The protein resides in the cell inner membrane. Its function is as follows. Part of the ABC transporter complex TcyJLN involved in L-cystine import. Responsible for the translocation of the substrate across the membrane. This Escherichia coli O6:H1 (strain CFT073 / ATCC 700928 / UPEC) protein is L-cystine transport system permease protein TcyL.